We begin with the raw amino-acid sequence, 218 residues long: Ribose-5-phosphate isomerase A (218 aa).

Substrate contacts are provided by residues 28–31 (TGST), 81–84 (DGAD), and 94–97 (KGGG). Glu103 (proton acceptor) is an active-site residue. Residue Lys121 coordinates substrate.

This sequence belongs to the ribose 5-phosphate isomerase family. In terms of assembly, homodimer.

It catalyses the reaction aldehydo-D-ribose 5-phosphate = D-ribulose 5-phosphate. It functions in the pathway carbohydrate degradation; pentose phosphate pathway; D-ribose 5-phosphate from D-ribulose 5-phosphate (non-oxidative stage): step 1/1. Its function is as follows. Catalyzes the reversible conversion of ribose-5-phosphate to ribulose 5-phosphate. This chain is Ribose-5-phosphate isomerase A, found in Shewanella sediminis (strain HAW-EB3).